A 322-amino-acid polypeptide reads, in one-letter code: Adenine deaminase (322 aa).

Residues H11, H13, and H189 each contribute to the Zn(2+) site. The active-site Proton donor is E192. D270 serves as a coordination point for Zn(2+). Position 271 (D271) interacts with substrate.

This sequence belongs to the metallo-dependent hydrolases superfamily. Adenosine and AMP deaminases family. Adenine deaminase type 2 subfamily. Zn(2+) serves as cofactor.

It catalyses the reaction adenine + H2O + H(+) = hypoxanthine + NH4(+). Its function is as follows. Catalyzes the hydrolytic deamination of adenine to hypoxanthine. Plays an important role in the purine salvage pathway and in nitrogen catabolism. The sequence is that of Adenine deaminase from Rhizobium rhizogenes (strain K84 / ATCC BAA-868) (Agrobacterium radiobacter).